Consider the following 130-residue polypeptide: Small ribosomal subunit protein uS9 (130 aa).

Residues 98 to 130 (LKRAGLLTRDPRMKERKKPGLKKARRSPQFSKR) form a disordered region. Residues 111–130 (KERKKPGLKKARRSPQFSKR) show a composition bias toward basic residues.

This sequence belongs to the universal ribosomal protein uS9 family.

This is Small ribosomal subunit protein uS9 from Staphylococcus epidermidis (strain ATCC 35984 / DSM 28319 / BCRC 17069 / CCUG 31568 / BM 3577 / RP62A).